A 121-amino-acid chain; its full sequence is Large ribosomal subunit protein uL14 (121 aa).

Belongs to the universal ribosomal protein uL14 family. As to quaternary structure, part of the 50S ribosomal subunit. Forms a cluster with proteins L3 and L19. In the 70S ribosome, L14 and L19 interact and together make contacts with the 16S rRNA in bridges B5 and B8.

Functionally, binds to 23S rRNA. Forms part of two intersubunit bridges in the 70S ribosome. The sequence is that of Large ribosomal subunit protein uL14 from Synechococcus sp. (strain CC9902).